Here is a 254-residue protein sequence, read N- to C-terminus: 5'-nucleotidase SurE (254 aa).

4 residues coordinate a divalent metal cation: aspartate 8, aspartate 9, serine 38, and asparagine 91.

Belongs to the SurE nucleotidase family. A divalent metal cation serves as cofactor.

The protein localises to the cytoplasm. The catalysed reaction is a ribonucleoside 5'-phosphate + H2O = a ribonucleoside + phosphate. Nucleotidase that shows phosphatase activity on nucleoside 5'-monophosphates. This Anaeromyxobacter dehalogenans (strain 2CP-1 / ATCC BAA-258) protein is 5'-nucleotidase SurE.